The sequence spans 237 residues: Redox-sensing transcriptional repressor Rex (237 aa).

A DNA-binding region (H-T-H motif) is located at residues 45-84; sequence LYYRELHRLLAAGESSTNSRDLGAMVNVSPAVVRRDLSSI. 119-124 is a binding site for NAD(+); the sequence is GVGSLG.

Belongs to the transcriptional regulatory Rex family. As to quaternary structure, homodimer.

The protein localises to the cytoplasm. Functionally, modulates transcription in response to changes in cellular NADH/NAD(+) redox state. The protein is Redox-sensing transcriptional repressor Rex of Rhodopirellula baltica (strain DSM 10527 / NCIMB 13988 / SH1).